A 522-amino-acid polypeptide reads, in one-letter code: Protein nucleotidyltransferase YdiU (522 aa).

8 residues coordinate ATP: Gly109, Gly111, Arg112, Lys132, Asp144, Gly145, Arg195, and Arg202. Asp271 serves as the catalytic Proton acceptor. Mg(2+) contacts are provided by Asn272 and Asp281. Residue Asp281 participates in ATP binding.

The protein belongs to the SELO family. Requires Mg(2+) as cofactor. Mn(2+) is required as a cofactor.

It carries out the reaction L-seryl-[protein] + ATP = 3-O-(5'-adenylyl)-L-seryl-[protein] + diphosphate. The enzyme catalyses L-threonyl-[protein] + ATP = 3-O-(5'-adenylyl)-L-threonyl-[protein] + diphosphate. The catalysed reaction is L-tyrosyl-[protein] + ATP = O-(5'-adenylyl)-L-tyrosyl-[protein] + diphosphate. It catalyses the reaction L-histidyl-[protein] + UTP = N(tele)-(5'-uridylyl)-L-histidyl-[protein] + diphosphate. It carries out the reaction L-seryl-[protein] + UTP = O-(5'-uridylyl)-L-seryl-[protein] + diphosphate. The enzyme catalyses L-tyrosyl-[protein] + UTP = O-(5'-uridylyl)-L-tyrosyl-[protein] + diphosphate. Functionally, nucleotidyltransferase involved in the post-translational modification of proteins. It can catalyze the addition of adenosine monophosphate (AMP) or uridine monophosphate (UMP) to a protein, resulting in modifications known as AMPylation and UMPylation. This chain is Protein nucleotidyltransferase YdiU, found in Burkholderia ambifaria (strain MC40-6).